A 354-amino-acid chain; its full sequence is uncharacterized protein (354 aa).

An N-terminal signal peptide occupies residues 1–21 (MRYLLIVITFFMGFSSLPAWA).

The protein to E.coli YbgO.

In terms of biological role, may be involved in a fimbrial system chaperoned by YqiH and exported by YqiG. This is an uncharacterized protein from Escherichia coli (strain K12).